Reading from the N-terminus, the 229-residue chain is Uracil-DNA glycosylase (229 aa).

D65 functions as the Proton acceptor in the catalytic mechanism.

The protein belongs to the uracil-DNA glycosylase (UDG) superfamily. UNG family.

It is found in the cytoplasm. The enzyme catalyses Hydrolyzes single-stranded DNA or mismatched double-stranded DNA and polynucleotides, releasing free uracil.. Its function is as follows. Excises uracil residues from the DNA which can arise as a result of misincorporation of dUMP residues by DNA polymerase or due to deamination of cytosine. The chain is Uracil-DNA glycosylase from Latilactobacillus sakei subsp. sakei (strain 23K) (Lactobacillus sakei subsp. sakei).